A 512-amino-acid polypeptide reads, in one-letter code: ATP synthase subunit alpha (512 aa).

Residue 169–176 (GDRQTGKT) participates in ATP binding.

Belongs to the ATPase alpha/beta chains family. As to quaternary structure, F-type ATPases have 2 components, CF(1) - the catalytic core - and CF(0) - the membrane proton channel. CF(1) has five subunits: alpha(3), beta(3), gamma(1), delta(1), epsilon(1). CF(0) has three main subunits: a(1), b(2) and c(9-12). The alpha and beta chains form an alternating ring which encloses part of the gamma chain. CF(1) is attached to CF(0) by a central stalk formed by the gamma and epsilon chains, while a peripheral stalk is formed by the delta and b chains.

Its subcellular location is the cell membrane. The enzyme catalyses ATP + H2O + 4 H(+)(in) = ADP + phosphate + 5 H(+)(out). In terms of biological role, produces ATP from ADP in the presence of a proton gradient across the membrane. The alpha chain is a regulatory subunit. This Buchnera aphidicola subsp. Acyrthosiphon pisum (strain 5A) protein is ATP synthase subunit alpha.